The primary structure comprises 190 residues: Ribonuclease HII (190 aa).

In terms of domain architecture, RNase H type-2 spans 1–190; sequence MAGVDEVGRG…FCRKIIENPD (190 aa). Residues Asp5, Glu6, and Asp101 each coordinate a divalent metal cation.

This sequence belongs to the RNase HII family. The cofactor is Mn(2+). Requires Mg(2+) as cofactor.

Its subcellular location is the cytoplasm. It catalyses the reaction Endonucleolytic cleavage to 5'-phosphomonoester.. Endonuclease that specifically degrades the RNA of RNA-DNA hybrids. In Synechocystis sp. (strain ATCC 27184 / PCC 6803 / Kazusa), this protein is Ribonuclease HII (rnhB).